We begin with the raw amino-acid sequence, 452 residues long: tRNA modification GTPase MnmE (452 aa).

(6S)-5-formyl-5,6,7,8-tetrahydrofolate-binding residues include Arg23, Glu80, and Lys119. Positions 215–374 (GIWIALVGQP…LQQGLLEMIG (160 aa)) constitute a TrmE-type G domain. Position 225 (Asn225) interacts with K(+). GTP is bound by residues 225-230 (NVGKSS), 244-250 (TEVPGTT), and 269-272 (DTAG). Ser229 serves as a coordination point for Mg(2+). K(+) contacts are provided by Thr244, Val246, and Thr249. Thr250 serves as a coordination point for Mg(2+). Lys452 contacts (6S)-5-formyl-5,6,7,8-tetrahydrofolate.

The protein belongs to the TRAFAC class TrmE-Era-EngA-EngB-Septin-like GTPase superfamily. TrmE GTPase family. In terms of assembly, homodimer. Heterotetramer of two MnmE and two MnmG subunits. It depends on K(+) as a cofactor.

The protein resides in the cytoplasm. Its function is as follows. Exhibits a very high intrinsic GTPase hydrolysis rate. Involved in the addition of a carboxymethylaminomethyl (cmnm) group at the wobble position (U34) of certain tRNAs, forming tRNA-cmnm(5)s(2)U34. The sequence is that of tRNA modification GTPase MnmE from Nitrosospira multiformis (strain ATCC 25196 / NCIMB 11849 / C 71).